The primary structure comprises 368 residues: 4-hydroxy-3-methylbut-2-en-1-yl diphosphate synthase (flavodoxin) (368 aa).

[4Fe-4S] cluster is bound by residues Cys-268, Cys-271, Cys-303, and Glu-310.

The protein belongs to the IspG family. The cofactor is [4Fe-4S] cluster.

The enzyme catalyses (2E)-4-hydroxy-3-methylbut-2-enyl diphosphate + oxidized [flavodoxin] + H2O + 2 H(+) = 2-C-methyl-D-erythritol 2,4-cyclic diphosphate + reduced [flavodoxin]. The protein operates within isoprenoid biosynthesis; isopentenyl diphosphate biosynthesis via DXP pathway; isopentenyl diphosphate from 1-deoxy-D-xylulose 5-phosphate: step 5/6. Its function is as follows. Converts 2C-methyl-D-erythritol 2,4-cyclodiphosphate (ME-2,4cPP) into 1-hydroxy-2-methyl-2-(E)-butenyl 4-diphosphate. This chain is 4-hydroxy-3-methylbut-2-en-1-yl diphosphate synthase (flavodoxin), found in Bacillus cytotoxicus (strain DSM 22905 / CIP 110041 / 391-98 / NVH 391-98).